We begin with the raw amino-acid sequence, 214 residues long: ER lumen protein-retaining receptor 3 (214 aa).

The Lumenal segment spans residues 1–4; that stretch reads MNIF. Residues 5 to 24 traverse the membrane as a helical segment; the sequence is RILGDVSHLLAIIILLLKMW. The Cytoplasmic segment spans residues 25–32; it reads KSKSCAGI. The chain crosses the membrane as a helical span at residues 33-52; that stretch reads SGKSQLLFALVFTTRYLDLF. The tract at residues 47-48 is interaction with the K-D-E-L motif on target proteins; the sequence is RY. Residues 53-58 lie on the Lumenal side of the membrane; sequence TVFISP. Residues 59–79 traverse the membrane as a helical segment; sequence YNTVMKIIFLACAYVTVYLIY. At 80–92 the chain is on the cytoplasmic side; it reads GKLRKSYDSENDT. The helical transmembrane segment at 93-110 threads the bilayer; sequence FRLEFLLVPVIGLSFLEN. At 111-116 the chain is on the lumenal side; it reads YEFTPL. The helical transmembrane segment at 117 to 135 threads the bilayer; sequence EILWTFSIYLESVAILPQL. At 136-149 the chain is on the cytoplasmic side; the sequence is FMISKTGEAESITT. The chain crosses the membrane as a helical span at residues 150-168; that stretch reads HYLFFLGLYRVLYLANWIW. The interval 159–169 is interaction with the K-D-E-L motif on target proteins; it reads RVLYLANWIWR. The Lumenal portion of the chain corresponds to 169–178; the sequence is RYHTEKFYDQ. Residues 179–199 traverse the membrane as a helical segment; the sequence is IAVVSGVVQTIFYFDFFYLYV. The Cytoplasmic segment spans residues 200–214; that stretch reads TKVLKGKKLSLPMPV. An important for recycling of cargo proteins with the sequence motif K-D-E-L from the Golgi to the endoplasmic reticulum region spans residues 204–207; it reads KGKK.

The protein belongs to the ERD2 family.

It localises to the endoplasmic reticulum membrane. The protein localises to the golgi apparatus membrane. The protein resides in the cytoplasmic vesicle. Its subcellular location is the COPI-coated vesicle membrane. Functionally, receptor for the C-terminal sequence motif K-D-E-L that is present on endoplasmic reticulum resident proteins and that mediates their recycling from the Golgi back to the endoplasmic reticulum. The sequence is that of ER lumen protein-retaining receptor 3 (kdelr3) from Xenopus laevis (African clawed frog).